The following is a 355-amino-acid chain: Trans-enoyl reductase (355 aa).

45 to 48 (VDTK) contributes to the NADP(+) binding site. 131-138 (ISFMTTGL) lines the substrate pocket. NADP(+)-binding positions include 166–169 (SSAT), 189–192 (SPRN), Tyr-207, and 254–255 (LE). Residue 275-279 (GPQML) participates in substrate binding. 344-345 (IS) lines the NADP(+) pocket.

The protein belongs to the zinc-containing alcohol dehydrogenase family. In terms of assembly, monomer.

The enzyme catalyses L-serine + 7 malonyl-CoA + acetyl-CoA + 2 S-adenosyl-L-methionine + ATP + 8 NADPH + 11 H(+) = (5S)-3-[(2E,6R,8E,10E,12E)-2,6-dimethyltetradeca-2,8,10,12-tetraenoyl]-5-(hydroxymethyl)pyrrolidine-2,4-dione + AMP + 2 S-adenosyl-L-homocysteine + 7 CO2 + diphosphate + 8 NADP(+) + 8 CoA + 6 H2O. Its pathway is mycotoxin biosynthesis. In terms of biological role, hybrid PKS-NRPS synthetase; part of the gene cluster that mediates the biosynthesis of trichosetin, a trans-fused decalin-containing tetramic acid with antimicrobial activity. The PKS module of PKS-NRPS1 together with the enoylreductase (ER) catalyze the formation of the polyketide unit which is then conjugated to L-serine by the condensation domain of the PKS-NRPS1 NRPS module. Activity of the Dieckmann cyclase domain (RED) results in release of the Dieckmann product intermediate. Diels-Alderase (DA) is involved in endo-selective Diels-Alder cycloaddition to form the decalin ring, leading to the production of N-desmethylequisetin also called trichosetin. The cluster does not contain the equisetin N-methyltransferase and consequently, trichosetin is isolated as final product. This is Trans-enoyl reductase from Gibberella fujikuroi (strain CBS 195.34 / IMI 58289 / NRRL A-6831) (Bakanae and foot rot disease fungus).